Consider the following 67-residue polypeptide: uncharacterized protein (67 aa).

This is an uncharacterized protein from Escherichia coli (strain K12).